Reading from the N-terminus, the 205-residue chain is Putative 3-methyladenine DNA glycosylase (205 aa).

This sequence belongs to the DNA glycosylase MPG family.

This chain is Putative 3-methyladenine DNA glycosylase, found in Bacillus thuringiensis (strain Al Hakam).